The sequence spans 581 residues: Pentatricopeptide repeat-containing protein At1g34160 (581 aa).

9 PPR repeats span residues 67 to 101, 108 to 142, 143 to 173, 174 to 208, 209 to 239, 240 to 270, 272 to 306, 307 to 341, and 342 to 372; these read LTND…SSSS, DALT…GLSA, DSLL…MPVR, DVAS…GIRR, SEVT…YSND, NVIV…FTGK, SVVT…GIKP, DDVS…GVER, and NMKH…MSMI. The interval 377–452 is type E motif; that stretch reads LWQSLLGASE…IPGLSYIEAK (76 aa). Residues 453–483 are type E(+) motif; sequence GTIHEFYNSDKSHEQWREIYEKIDEIRFKIR. Residues 484–581 form a type DYW motif region; that stretch reads EDGYVAQTGL…DGSCSCRDFW (98 aa).

Belongs to the PPR family. PCMP-H subfamily.

The chain is Pentatricopeptide repeat-containing protein At1g34160 (PCMP-H68) from Arabidopsis thaliana (Mouse-ear cress).